The sequence spans 286 residues: Transcription factor egl-46 (286 aa).

Residues 180–200 form a C2H2-type 1; atypical zinc finger; that stretch reads CICRLCKVKYEDVFKLAQHKC. 2 C2H2-type zinc fingers span residues 208–230 and 248–271; these read YKCP…RRWH and VSCS…STCQ.

It belongs to the INSM1 family. As to quaternary structure, interacts (via C-terminus) with egl-44 (via N-terminus); the interaction is direct; the interaction may regulate transcription. As to expression, expressed in touch cells, HSN cells, ventral cord motor neurons and ciliated ray neurons.

The protein resides in the nucleus. In terms of biological role, transcription factor. Represses expression of genes involved in differentiation of touch receptor neurons (TRN), probably acting as a heterodimer with egl-44, perhaps by occupying similar cis-regulatory elements as an unc-86/mec-3 heterodimer. Plays a role in cell fate specification of neurons, including the hook neuron HOB, the gas-sensing neuron BAG and touch receptor neurons. Plays a role in neuron differentiation by repressing the expression of zag-1 in FLP neurons, probably acting as a heterodimer with egl-44; because zag-1 represses expression of egl-46 and egl-44, together these proteins form a bistable, negative-feedback loop that regulates the choice between neuronal fates. Acts downstream of egl-44 to prevent touch cell differentiation in FLP neurons. Involved in male mating behavior, acting in concert with egl-44, via modulation of expression of polycystins lov-1 and pkd-2, homeodomain protein ceh-26, and neuropeptide-like protein nlp-8. Modulates the expression of a subset of terminal differentiation genes involved in O(2)- and CO(2)-sensing, acting in parallel to ets-5 and egl-13. May act upstream of RFX transcription factor daf-19 to regulate gene expression specifically in the HOB neuron. Plays a role in specifying commissural dendrites of the PVD nociceptive neurons, acting in concert with egl-44. In association with egl-44, regulates cell cycle exit in the neuronal Q cell lineage. The sequence is that of Transcription factor egl-46 from Caenorhabditis elegans.